A 343-amino-acid chain; its full sequence is Thromboxane A2 receptor (343 aa).

Over 1–29 (MWPNGSSLGPCFRPTNITLEERRLIASPW) the chain is Extracellular. N4 and N16 each carry an N-linked (GlcNAc...) asparagine glycan. The chain crosses the membrane as a helical span at residues 30–52 (FAASFCVVGLASNLLALSVLAGA). The Cytoplasmic portion of the chain corresponds to 53 to 66 (RQGGSHTRSSFLTF). The helical transmembrane segment at 67 to 87 (LCGLVLTDFLGLLVTGTIVVS) threads the bilayer. The Extracellular segment spans residues 88 to 106 (QHAALFEWHAVDPGCRLCR). A disulfide bond links C105 and C183. Residues 107-128 (FMGVVMIFFGLSPLLLGAAMAS) traverse the membrane as a helical segment. At 129–149 (ERYLGITRPFSRPAVASQRRA) the chain is on the cytoplasmic side. Residues 150 to 172 (WATVGLVWAAALALGLLPLLGVG) traverse the membrane as a helical segment. Residues 173 to 193 (RYTVQYPGSWCFLTLGAESGD) lie on the Extracellular side of the membrane. A helical transmembrane segment spans residues 194–219 (VAFGLLFSMLGGLSVGLSFLLNTVSV). The Cytoplasmic portion of the chain corresponds to 220 to 246 (ATLCHVYHGQEAAQQRPRDSEVEMMAQ). Residues 247-270 (LLGIMVVASVCWLPLLVFIAQTVL) traverse the membrane as a helical segment. The Extracellular segment spans residues 271–289 (RNPPAMSPAGQLSRTTEKE). Residues 290-311 (LLIYLRVATWNQILDPWVYILF) traverse the membrane as a helical segment. Residues 312–343 (RRAVLRRLQPRLSTRPRSLSLQPQLTQRSGLQ) lie on the Cytoplasmic side of the membrane. 2 positions are modified to phosphoserine: S329 and S331.

It belongs to the G-protein coupled receptor 1 family. Interacts with RPGRIP1L. Interacts with PSMA3. Interacts with RACK1; the interaction regulates TBXA2R cell surface expression.

It localises to the cell membrane. Receptor for thromboxane A2 (TXA2), a potent stimulator of platelet aggregation. The activity of this receptor is mediated by a G-protein that activates a phosphatidylinositol-calcium second messenger system. In the kidney, the binding of TXA2 to glomerular TP receptors causes intense vasoconstriction. Activates phospholipase C. In terms of biological role, activates adenylyl cyclase. Its function is as follows. Inhibits adenylyl cyclase. The polypeptide is Thromboxane A2 receptor (TBXA2R) (Homo sapiens (Human)).